Consider the following 84-residue polypeptide: ATPase-stabilizing factor 15 kDa protein (84 aa).

A compositionally biased stretch (basic and acidic residues) spans 1 to 18; sequence MTRTNKWTEREGKADPKY. A disordered region spans residues 1-84; that stretch reads MTRTNKWTER…EQKFENVQKE (84 aa). Phosphoserine is present on residues Ser-28 and Ser-69. Residues 74 to 84 show a composition bias toward basic and acidic residues; the sequence is HEQKFENVQKE.

This sequence belongs to the STF2 family.

It localises to the mitochondrion. Its subcellular location is the cytoplasm. Its function is as follows. Found to stabilize, together with STF1, a complex of intrinsic ATPase inhibitor INH1 and proton-translocating ATPase (F(1)F(0)-ATPase) in mitochondrial membranes. Binds to the F0 part and may function to hold the ATPase inhibitor or STF1 on the F1 subunit. Also acts as a hydrophilins that enhances dry stress tolerance. Cell viability after desiccation and rehydration is due to the antioxidant capacity of the protein, which reduces the number of apoptotic cells during stress conditions by minimising the accumulation of reactive oxygen species (ROS) in the cells. The chain is ATPase-stabilizing factor 15 kDa protein (STF2) from Saccharomyces cerevisiae (strain ATCC 204508 / S288c) (Baker's yeast).